Reading from the N-terminus, the 599-residue chain is Leucine zipper putative tumor suppressor 1 (599 aa).

Glycine 2 is lipidated: N-myristoyl glycine. Disordered stretches follow at residues 135 to 190 (GAIL…TTSS) and 288 to 324 (EFASGQTFEERPRRTRDELECLEPKSKLKPPSQKSQR). Over residues 153–162 (PPDKPKEQEL) the composition is skewed to basic and acidic residues. The span at 174–190 (SGRNSMSSLPTHSTTSS) shows a compositional bias: polar residues. Positions 256–572 (LSTDECTIQE…LEKALQQLAR (317 aa)) form a coiled coil. The segment covering 288 to 313 (EFASGQTFEERPRRTRDELECLEPKS) has biased composition (basic and acidic residues).

This sequence belongs to the LZTS family. As to quaternary structure, binds EEF1G, TLK2 and CDK1. Phosphorylated on serine residues. Hyperphosphorylated by the cAMP-dependent kinase PKA during cell-cycle progression.

Its subcellular location is the cytoplasm. It localises to the cell membrane. It is found in the cell projection. The protein localises to the dendritic spine. The protein resides in the postsynaptic density. Its subcellular location is the synapse. In terms of biological role, involved in the regulation of cell growth. May stabilize the active CDC2-cyclin B1 complex and thereby contribute to the regulation of the cell cycle and the prevention of uncontrolled cell proliferation. May act as tumor suppressor. The protein is Leucine zipper putative tumor suppressor 1 (Lzts1) of Mus musculus (Mouse).